A 387-amino-acid chain; its full sequence is UDP-N-acetylglucosamine--N-acetylmuramyl-(pentapeptide) pyrophosphoryl-undecaprenol N-acetylglucosamine transferase (387 aa).

The disordered stretch occupies residues 1–22 (MSEHVRSAGPPQASTAPSGGSA). UDP-N-acetyl-alpha-D-glucosamine contacts are provided by residues 41-43 (TGG), asparagine 158, arginine 194, serine 222, isoleucine 276, and glutamine 321.

This sequence belongs to the glycosyltransferase 28 family. MurG subfamily.

Its subcellular location is the cell inner membrane. The enzyme catalyses di-trans,octa-cis-undecaprenyl diphospho-N-acetyl-alpha-D-muramoyl-L-alanyl-D-glutamyl-meso-2,6-diaminopimeloyl-D-alanyl-D-alanine + UDP-N-acetyl-alpha-D-glucosamine = di-trans,octa-cis-undecaprenyl diphospho-[N-acetyl-alpha-D-glucosaminyl-(1-&gt;4)]-N-acetyl-alpha-D-muramoyl-L-alanyl-D-glutamyl-meso-2,6-diaminopimeloyl-D-alanyl-D-alanine + UDP + H(+). The protein operates within cell wall biogenesis; peptidoglycan biosynthesis. Cell wall formation. Catalyzes the transfer of a GlcNAc subunit on undecaprenyl-pyrophosphoryl-MurNAc-pentapeptide (lipid intermediate I) to form undecaprenyl-pyrophosphoryl-MurNAc-(pentapeptide)GlcNAc (lipid intermediate II). The chain is UDP-N-acetylglucosamine--N-acetylmuramyl-(pentapeptide) pyrophosphoryl-undecaprenol N-acetylglucosamine transferase from Polaromonas sp. (strain JS666 / ATCC BAA-500).